A 272-amino-acid chain; its full sequence is Outer surface protein A (272 aa).

An N-terminal signal peptide occupies residues 1-16 (MKKYLLGIGLILALIA). Cys17 carries N-palmitoyl cysteine lipidation. Cys17 is lipidated: S-diacylglycerol cysteine.

The protein belongs to the OspA lipoprotein family.

The protein resides in the cell outer membrane. The protein localises to the cell surface. This is Outer surface protein A from Borreliella burgdorferi (Lyme disease spirochete).